Here is a 339-residue protein sequence, read N- to C-terminus: tRNA pseudouridine synthase D (339 aa).

Asp-80 serves as the catalytic Nucleophile. One can recognise a TRUD domain in the interval 155-311; that stretch reads GFPNYFTEQR…AKGFSWAFEP (157 aa).

Belongs to the pseudouridine synthase TruD family.

The enzyme catalyses uridine(13) in tRNA = pseudouridine(13) in tRNA. Its function is as follows. Responsible for synthesis of pseudouridine from uracil-13 in transfer RNAs. The polypeptide is tRNA pseudouridine synthase D (Haemophilus influenzae (strain 86-028NP)).